The chain runs to 585 residues: A-type ATP synthase subunit A (585 aa).

An ATP-binding site is contributed by 231–238 (GPFGSGKT).

It belongs to the ATPase alpha/beta chains family. As to quaternary structure, has multiple subunits with at least A(3), B(3), C, D, E, F, H, I and proteolipid K(x).

It is found in the cell membrane. The enzyme catalyses ATP + H2O + 4 H(+)(in) = ADP + phosphate + 5 H(+)(out). Its function is as follows. Component of the A-type ATP synthase that produces ATP from ADP in the presence of a proton gradient across the membrane. The A chain is the catalytic subunit. The chain is A-type ATP synthase subunit A from Thermococcus gammatolerans (strain DSM 15229 / JCM 11827 / EJ3).